A 553-amino-acid chain; its full sequence is HTH-type transcriptional regulator SgrR (553 aa).

The region spanning 1–113 (MSTSRLQQQF…RQMLLSQLGR (113 aa)) is the HTH marR-type domain. Residues 26–49 (LQALAEVLNCSRRHVRSLLGKMQH) constitute a DNA-binding region (H-T-H motif). The solute-binding stretch occupies residues 163 to 494 (ELEPDLSHHW…EELHQDIESW (332 aa)).

Activates the small RNA gene sgrS under glucose-phosphate stress conditions as well as yfdZ. Represses its own transcription under both stress and non-stress conditions. Might act as a sensor of the intracellular accumulation of phosphoglucose by binding these molecules in its C-terminal solute-binding domain. This chain is HTH-type transcriptional regulator SgrR, found in Yersinia pestis bv. Antiqua (strain Antiqua).